The chain runs to 295 residues: DegV domain-containing protein MG326 (295 aa).

Positions Thr4–Ile292 constitute a DegV domain. Hexadecanoate contacts are provided by Thr63 and Ser95.

Functionally, may bind long-chain fatty acids, such as palmitate, and may play a role in lipid transport or fatty acid metabolism. The protein is DegV domain-containing protein MG326 of Mycoplasma genitalium (strain ATCC 33530 / DSM 19775 / NCTC 10195 / G37) (Mycoplasmoides genitalium).